The chain runs to 261 residues: Small ribosomal subunit protein uS2 (261 aa).

This sequence belongs to the universal ribosomal protein uS2 family.

This Streptococcus mutans serotype c (strain ATCC 700610 / UA159) protein is Small ribosomal subunit protein uS2.